The chain runs to 1142 residues: Envelopment polyprotein (1142 aa).

Residues 1-21 (MSKFCLCLSLLGVLLLQVCDT) form the signal peptide. The Lumenal portion of the chain corresponds to 22 to 489 (RSLLELKIEC…LCVPGIHGWS (468 aa)). 6 disulfide bridges follow: Cys31–Cys156, Cys65–Cys162, Cys114–Cys133, Cys138–Cys143, Cys180–Cys190, and Cys215–Cys253. The N-linked (GlcNAc...) asparagine; by host glycan is linked to Asn139. Asn353 carries N-linked (GlcNAc...) asparagine; by host glycosylation. Intrachain disulfides connect Cys382–Cys441, Cys386–Cys395, Cys411–Cys430, and Cys458–Cys481. The N-linked (GlcNAc...) asparagine; by host glycan is linked to Asn405. Residues 490–510 (TIALLATFCFGWLLIPIISLV) traverse the membrane as a helical segment. Residues 511 to 633 (SIKIMLLFAY…LSVFRYRSRC (123 aa)) lie on the Cytoplasmic side of the membrane. The interval 522-539 (CSKYSNDSKFRLLIEKVK) is binding to the ribonucleoprotein. 2 CCHC-type zinc fingers span residues 551–571 (CEVCQQECEMAKELESHKKSC) and 576–597 (CPYCMNPTESTESALQAHFKVC). 3 binding to the ribonucleoprotein regions span residues 594-611 (FKVCKLTTRFQENLRKSL), 598-609 (KLTTRFQENLRK), and 617-631 (KRGCYRTLSVFRYRS). Positions 617–640 (KRGCYRTLSVFRYRSRCFVGLVWC) constitute an ITAM domain. A YxxL motif is present at residues 621-624 (YRTL). The helical transmembrane segment at 634 to 654 (FVGLVWCILLVLELVIWAASA) threads the bilayer. Residues 655–1110 (DTVEIKTGWT…EWLMGILSGN (456 aa)) lie on the Lumenal side of the membrane. 8 disulfides stabilise this stretch: Cys741–Cys776, Cys745–Cys783, Cys757–Cys890, Cys771–Cys901, Cys786–Cys909, Cys812–Cys821, Cys829–Cys838, and Cys869–Cys873. Residues 763–783 (YEFETGWGCNPGDCPGVGTGC) form a fusion loop region. A glycan (N-linked (GlcNAc...) asparagine; by host) is linked at Asn933. 5 disulfide bridges follow: Cys975/Cys1005, Cys998/Cys1050, Cys1015/Cys1020, Cys1051/Cys1056, and Cys1090/Cys1094. The helical transmembrane segment at 1111–1131 (WMVVAVLVVLLILSIFLFSLC) threads the bilayer. The binding to the ribonucleoprotein stretch occupies residues 1127–1142 (LFSLCCPRRVVHKKSS). Over 1132–1142 (CPRRVVHKKSS) the chain is Cytoplasmic.

It belongs to the hantavirus envelope glycoprotein family. In terms of assembly, homodimer. Homotetramer; forms heterotetrameric Gn-Gc spikes in the pre-fusion conformation. Interacts (via C-terminus) with the nucleoprotein. Interacts with host TUFM; this interaction contributes to the virus-induced degradation of mitochondria by autophagy, which leads to degradation of host MAVS and inhibition of type I interferon (IFN) responses. Interacts with host MAP1LC3B; this interaction contributes to the virus-induced degradation of mitochondria by autophagy, which leads to degradation of host MAVS and inhibition of type I interferon (IFN) responses. Homodimer. Homotetramer; forms heterotetrameric Gn-Gc spikes in the pre-fusion conformation. Homotrimer; forms homotrimer in the post-fusion conformation at acidic pH. Interacts (via C-terminus) with the nucleoprotein. In terms of processing, envelope polyprotein precursor is quickly cleaved in vivo just after synthesis, presumably by host signal peptidase.

It is found in the virion membrane. Its subcellular location is the host cell surface. The protein localises to the host Golgi apparatus membrane. The protein resides in the host endoplasmic reticulum membrane. It localises to the host mitochondrion. In terms of biological role, forms homotetramers with glycoprotein C at the surface of the virion. Attaches the virion to host cell receptors including integrin alpha5/ITGB1. This attachment induces virion internalization predominantly through clathrin-dependent endocytosis. Mediates the assembly and budding of infectious virus particles through its interaction with the nucleocapsid protein and the viral genome. May dysregulate normal immune and endothelial cell responses through an ITAM motif. Translocates to mitochondria, binds to host TUFM and recruits MAP1LC3B. These interactions induce mitochondrial autophagy and therefore destruction of host MAVS leading to inhibition of type I interferon (IFN) responses. Concomitant breakdown of glycoprotein N is apparently prevented by the nucleoprotein that may inhibit Gn-stimulated autophagosome-lysosome fusion. Interacts with the viral genomic RNA. Functionally, forms homotetramers with glycoprotein N at the surface of the virion. Attaches the virion to host cell receptors including integrin ITGAV/ITGB3. This attachment induces virion internalization predominantly through clathrin-dependent endocytosis. Class II fusion protein that promotes fusion of viral membrane with host endosomal membrane after endocytosis of the virion. In Microtus pennsylvanicus (Meadow vole), this protein is Envelopment polyprotein (GP).